A 229-amino-acid polypeptide reads, in one-letter code: Uracil-DNA glycosylase (229 aa).

Asp70 serves as the catalytic Proton acceptor.

The protein belongs to the uracil-DNA glycosylase (UDG) superfamily. UNG family.

The protein localises to the cytoplasm. The enzyme catalyses Hydrolyzes single-stranded DNA or mismatched double-stranded DNA and polynucleotides, releasing free uracil.. Functionally, excises uracil residues from the DNA which can arise as a result of misincorporation of dUMP residues by DNA polymerase or due to deamination of cytosine. This is Uracil-DNA glycosylase from Chlamydia trachomatis serovar A (strain ATCC VR-571B / DSM 19440 / HAR-13).